We begin with the raw amino-acid sequence, 300 residues long: MAGTSRNVRVLVTGANGFVGSHIVSLLLSRGYVVNATVRRQTASEKLIATFACDRLHVFVIPDLTSEQALDEAIRGCKYVVHVASTVPSKEQASGIDIDSAISSIESVMNSAVAHASEKVVLTSSMSTHLDVKAPILNESTWYTPDRSSTKLMVQYMSSKTLVERRAWELSSTLKLPLTTVAPVYIGGPTIIHEQDPKSSVSNQDLLRCIEDESRSRIPGWIDVRTVAHLHLHAIEDHSLNGRRILACTHNRGVVPMDCSLMNSLLAKDSAALIDFDRTKRDLLEQIDAFNSGQTRRVVA.

Residues 14 to 20 (GANGFVG), R39, 63 to 64 (DL), 83 to 85 (VAS), Y156, K160, 183 to 186 (PVYI), and S199 contribute to the NADP(+) site. The Proton donor role is filled by K160.

It belongs to the NAD(P)-dependent epimerase/dehydratase family. Dihydroflavonol-4-reductase subfamily.

It functions in the pathway secondary metabolite biosynthesis. Fatty acid hydroxylase; part of the gene cluster that mediates the biosynthesis of the glycolipid biosurfactant ustilagic acid (UA). UA is a secreted cellobiose glycolipid that is toxic for many microorganisms and confers biocontrol activity to U.maydis. UA consists of 15,16-dihydroxypalmitic or 2,15,16-trihydroxypalmitic acid, which is O-glycosidically linked to cellobiose at its terminal hydroxyl group. In addition, the cellobiose moiety is acetylated and acylated with a short-chain hydroxy fatty acid. UA biosynthesis starts with omega-hydroxylation of palmitic acid catalyzed by the cytochrome P450 monooxygenase cyp1. Terminal hydroxylation of palmitic acid precedes subterminal hydroxylation catalyzed by the cytochrome P450 monooxygenase cyp2. Sequential glucosylation of the hydroxy fatty acid is probably catalyzed by the glycosyltransferase ugt1. The cellobiose lipid is further decorated by acetylation of the proximal glucose residue and by acylation with a short-chain beta-hydroxy fatty acid at the distal glucose residue. The acyltransferase uat1 may be a good candidate for catalyzing either acetylation or acylation of the cellobiose lipid. The fatty acid synthase fas2 may be involved in synthesis of the carbon backbone of the short-chain beta-hydroxy fatty acid esterified to the cellobiose disaccharide. The secreted UA consists of a mixture of both alpha-hydroxylated and non-hydroxylated glycolipids; therefore, alpha-hydroxylation of the long-chain fatty, catalyzed by the fatty acid hydroxylase ahd1, occurs late in UA biosynthesis and may be the last step before secretion. This chain is Fatty acid hydroxylase uhd1, found in Mycosarcoma maydis (Corn smut fungus).